The primary structure comprises 55 residues: Protein CADMIUM TOLERANCE 1 (55 aa).

The chain crosses the membrane as a helical span at residues 24–40 (GCLYACIFTALCCFCCY).

Belongs to the CYSTM1 family.

Its subcellular location is the cell membrane. The protein resides in the secreted. It is found in the cell wall. Confers resistance to heavy metal ions (e.g. cadmium (CdCl(2)) and copper (CuCl(2))) by chelating them at the plasma membrane of root cells, thus stopping their entry and reducing their accumulation. The polypeptide is Protein CADMIUM TOLERANCE 1 (Echinochloa crus-galli subsp. caudata (Cockspur)).